We begin with the raw amino-acid sequence, 316 residues long: 4-hydroxy-3-methylbut-2-enyl diphosphate reductase (316 aa).

A [4Fe-4S] cluster-binding site is contributed by cysteine 18. Histidine 47 and histidine 80 together coordinate (2E)-4-hydroxy-3-methylbut-2-enyl diphosphate. 2 residues coordinate dimethylallyl diphosphate: histidine 47 and histidine 80. Residues histidine 47 and histidine 80 each contribute to the isopentenyl diphosphate site. Cysteine 102 contributes to the [4Fe-4S] cluster binding site. Histidine 130 contacts (2E)-4-hydroxy-3-methylbut-2-enyl diphosphate. Residue histidine 130 coordinates dimethylallyl diphosphate. Histidine 130 is a binding site for isopentenyl diphosphate. Glutamate 132 acts as the Proton donor in catalysis. A (2E)-4-hydroxy-3-methylbut-2-enyl diphosphate-binding site is contributed by threonine 171. Cysteine 201 serves as a coordination point for [4Fe-4S] cluster. (2E)-4-hydroxy-3-methylbut-2-enyl diphosphate is bound by residues serine 229, serine 230, asparagine 231, and serine 274. Dimethylallyl diphosphate contacts are provided by serine 229, serine 230, asparagine 231, and serine 274. Isopentenyl diphosphate is bound by residues serine 229, serine 230, asparagine 231, and serine 274.

Belongs to the IspH family. [4Fe-4S] cluster serves as cofactor.

It catalyses the reaction isopentenyl diphosphate + 2 oxidized [2Fe-2S]-[ferredoxin] + H2O = (2E)-4-hydroxy-3-methylbut-2-enyl diphosphate + 2 reduced [2Fe-2S]-[ferredoxin] + 2 H(+). It carries out the reaction dimethylallyl diphosphate + 2 oxidized [2Fe-2S]-[ferredoxin] + H2O = (2E)-4-hydroxy-3-methylbut-2-enyl diphosphate + 2 reduced [2Fe-2S]-[ferredoxin] + 2 H(+). The protein operates within isoprenoid biosynthesis; dimethylallyl diphosphate biosynthesis; dimethylallyl diphosphate from (2E)-4-hydroxy-3-methylbutenyl diphosphate: step 1/1. Its pathway is isoprenoid biosynthesis; isopentenyl diphosphate biosynthesis via DXP pathway; isopentenyl diphosphate from 1-deoxy-D-xylulose 5-phosphate: step 6/6. Catalyzes the conversion of 1-hydroxy-2-methyl-2-(E)-butenyl 4-diphosphate (HMBPP) into a mixture of isopentenyl diphosphate (IPP) and dimethylallyl diphosphate (DMAPP). Acts in the terminal step of the DOXP/MEP pathway for isoprenoid precursor biosynthesis. The polypeptide is 4-hydroxy-3-methylbut-2-enyl diphosphate reductase (Ruegeria sp. (strain TM1040) (Silicibacter sp.)).